Consider the following 181-residue polypeptide: Large ribosomal subunit protein uL6m (181 aa).

It belongs to the universal ribosomal protein uL6 family.

It is found in the mitochondrion. In Acanthamoeba castellanii (Amoeba), this protein is Large ribosomal subunit protein uL6m (RPL6).